Reading from the N-terminus, the 189-residue chain is MPKTRRRPRRSQRKRPPTPWPTSQGLDRVFFSDTQSTCLETVYRATGAPSLGDYVRPVYIVTPYWPPVQSIRSPGTPSMDALSAQLYSSLSLDSPPSPPREPLRPSRSLPRRPPIQPPTFHPPSSRPCANTPPSETDTWNPPLGSTSQPCLFQTPASGPKTCTPSGEAPLSACTSTSFPPPSPGPSCPT.

Positions 1–16 (MPKTRRRPRRSQRKRP) are enriched in basic residues. The tract at residues 1–28 (MPKTRRRPRRSQRKRPPTPWPTSQGLDR) is disordered. A Nuclear localization signal, and RNA-binding (RxRE) motif is present at residues 2 to 18 (PKTRRRPRRSQRKRPPT). The interval 56-70 (RPVYIVTPYWPPVQS) is homomultimerization. A Phosphoserine; by host modification is found at Ser70. Positions 82 to 93 (LSAQLYSSLSLD) match the Nuclear export signal motif. Over residues 84-94 (AQLYSSLSLDS) the composition is skewed to low complexity. A disordered region spans residues 84–189 (AQLYSSLSLD…PPSPGPSCPT (106 aa)). Residues 111-125 (RRPPIQPPTFHPPSS) show a composition bias toward pro residues. Positions 123–131 (PSSRPCANT) are homomultimerization. Residues 127 to 164 (PCANTPPSETDTWNPPLGSTSQPCLFQTPASGPKTCTP) are compositionally biased toward polar residues. The residue at position 174 (Thr174) is a Phosphothreonine; by host. At Ser177 the chain carries Phosphoserine; by host. Residues 178–189 (FPPPSPGPSCPT) are compositionally biased toward pro residues.

This sequence belongs to the deltaretrovirus Rex protein family. Homomultimer. Multimeric assembly is essential for activity and involves XPO1. Binds to human XPO1 and KPNB1. Interacts (via N-terminal nuclear localization signal) with human NPM1. Phosphorylated.

The protein localises to the host nucleus. It localises to the host nucleolus. The protein resides in the host cytoplasm. Its function is as follows. Rex escorts unspliced gag-pro-pol and singly spliced env mRNAs out of the nucleus of infected cells. These mRNAs carry a recognition sequence called Rex responsive element (RxRE or XRE) located at the 3' region of the long terminal repeat (LTR). This function is essential since most HTLV proteins are translated from unspliced or partially spliced pre-mRNAs that cannot exit the nucleus by the pathway used by fully processed cellular mRNAs. Rex itself is translated from a fully spliced mRNA that probably readily exits the nucleus. Rex's nuclear localization signal (NLS) binds directly to KPNB1/importin beta-1 without previous binding to KPNA1/importin alpha-1. KPNB1 binds to the GDP bound form of RAN (Ran-GDP) and targets Rex to the nucleus. In the nucleus, the conversion from Ran-GDP to Ran-GTP dissociates Rex from KPNB1 and allows Rex's binding to the RRE in viral pre-mRNAs. Rex multimerizes on the RRE via cooperative assembly. This multimerization is critical for its full biological activity, since it may shield the viral RNA from being spliced or down-regulated, and probably exposes Rex's nuclear export signal (NES) to the surface. Rex can then form a complex with XPO1/CRM1, RANBP3 and Ran-GTP, leading to nuclear export of the complex. Conversion from Ran-GTP to Ran-GDP mediates dissociation of the Rex/RRE/XPO1/RANBP3/RAN complex, so that Rex can return to the nucleus for a subsequent round of export. This is Protein Rex from Homo sapiens (Human).